A 475-amino-acid chain; its full sequence is F-box protein At3g59150 (475 aa).

An F-box domain is found at 12–58 (GDVISNLPNDLLCRILSYLSTKEAALTSILSKRWSNLLLSIPILDFD).

In Arabidopsis thaliana (Mouse-ear cress), this protein is F-box protein At3g59150.